The following is a 117-amino-acid chain: Ribosome-binding factor A (117 aa).

This sequence belongs to the RbfA family. Monomer. Binds 30S ribosomal subunits, but not 50S ribosomal subunits or 70S ribosomes.

It localises to the cytoplasm. Functionally, one of several proteins that assist in the late maturation steps of the functional core of the 30S ribosomal subunit. Associates with free 30S ribosomal subunits (but not with 30S subunits that are part of 70S ribosomes or polysomes). Required for efficient processing of 16S rRNA. May interact with the 5'-terminal helix region of 16S rRNA. This is Ribosome-binding factor A from Bacillus subtilis (strain 168).